The chain runs to 113 residues: Probable 4-amino-4-deoxy-L-arabinose-phosphoundecaprenol flippase subunit ArnE (113 aa).

A run of 3 helical transmembrane segments spans residues 40 to 60 (FGWL…WLLV), 64 to 84 (LPLG…TLLA), and 92 to 112 (VDRH…LMQG).

Belongs to the ArnE family. As to quaternary structure, heterodimer of ArnE and ArnF.

It is found in the cell inner membrane. The protein operates within bacterial outer membrane biogenesis; lipopolysaccharide biosynthesis. Functionally, translocates 4-amino-4-deoxy-L-arabinose-phosphoundecaprenol (alpha-L-Ara4N-phosphoundecaprenol) from the cytoplasmic to the periplasmic side of the inner membrane. This Pectobacterium atrosepticum (strain SCRI 1043 / ATCC BAA-672) (Erwinia carotovora subsp. atroseptica) protein is Probable 4-amino-4-deoxy-L-arabinose-phosphoundecaprenol flippase subunit ArnE.